The primary structure comprises 194 residues: ATP-dependent Clp protease proteolytic subunit (194 aa).

The active-site Nucleophile is the Ser98. Residue His123 is part of the active site.

The protein belongs to the peptidase S14 family. Component of the chloroplastic Clp protease core complex.

The protein resides in the plastid. The protein localises to the cyanelle. The catalysed reaction is Hydrolysis of proteins to small peptides in the presence of ATP and magnesium. alpha-casein is the usual test substrate. In the absence of ATP, only oligopeptides shorter than five residues are hydrolyzed (such as succinyl-Leu-Tyr-|-NHMec, and Leu-Tyr-Leu-|-Tyr-Trp, in which cleavage of the -Tyr-|-Leu- and -Tyr-|-Trp bonds also occurs).. In terms of biological role, cleaves peptides in various proteins in a process that requires ATP hydrolysis. Has a chymotrypsin-like activity. Plays a major role in the degradation of misfolded proteins. In Cyanophora paradoxa, this protein is ATP-dependent Clp protease proteolytic subunit (clpP-A).